A 117-amino-acid polypeptide reads, in one-letter code: Large ribosomal subunit protein bL20c (117 aa).

This sequence belongs to the bacterial ribosomal protein bL20 family.

It localises to the plastid. It is found in the chloroplast. In terms of biological role, binds directly to 23S ribosomal RNA and is necessary for the in vitro assembly process of the 50S ribosomal subunit. It is not involved in the protein synthesizing functions of that subunit. The polypeptide is Large ribosomal subunit protein bL20c (Gossypium hirsutum (Upland cotton)).